The chain runs to 79 residues: Protein FAM236C (79 aa).

The segment at lysine 19–proline 48 is disordered.

The protein belongs to the FAM236 family.

The sequence is that of Protein FAM236C from Homo sapiens (Human).